Consider the following 115-residue polypeptide: Evasin P1182 (115 aa).

A signal peptide spans 1-26 (MALNWSFRVIFVSTMWCALLKFATLG). 4 cysteine pairs are disulfide-bonded: Cys-38/Cys-58, Cys-54/Cys-94, Cys-70/Cys-99, and Cys-89/Cys-108. Asn-45, Asn-72, and Asn-103 each carry an N-linked (GlcNAc...) asparagine glycan.

The protein localises to the secreted. Its function is as follows. Salivary chemokine-binding protein which binds to host chemokines CCL2, CCL3, CCL4, CCL8 and CCL18. In Amblyomma maculatum (Gulf Coast tick), this protein is Evasin P1182.